The following is a 147-amino-acid chain: E3 ubiquitin-protein ligase RHA2B (147 aa).

Residues 74 to 116 form an RING-type; atypical zinc finger; it reads CIVCLSKLKTGEEVRKLDCRHVFHKQCLEGWLQHLNFNCPLCR.

As to quaternary structure, interacts with NAC19. As to expression, expressed in vascular tissue, root tips, embryos and pistils.

The protein localises to the cytoplasm. It is found in the nucleus. It catalyses the reaction S-ubiquitinyl-[E2 ubiquitin-conjugating enzyme]-L-cysteine + [acceptor protein]-L-lysine = [E2 ubiquitin-conjugating enzyme]-L-cysteine + N(6)-ubiquitinyl-[acceptor protein]-L-lysine.. It participates in protein modification; protein ubiquitination. Functionally, E3 ubiquitin-protein ligase involved in the positive regulation of abscisic acid (ABA) signaling and responses to salt and osmotic stresses during seed germination and early seedling development. Acts additively with RHA2A in regulating ABA signaling and drought response. Possesses E3 ubiquitin ligase activity in vitro. This is E3 ubiquitin-protein ligase RHA2B from Arabidopsis thaliana (Mouse-ear cress).